The chain runs to 147 residues: Small ribosomal subunit protein eS19 (147 aa).

Belongs to the eukaryotic ribosomal protein eS19 family. Component of the small ribosomal subunit.

Its subcellular location is the cytoplasm. It is found in the nucleus. In terms of biological role, component of the small ribosomal subunit. The ribosome is a large ribonucleoprotein complex responsible for the synthesis of proteins in the cell. Required for pre-rRNA processing and maturation of 40S ribosomal subunits. This chain is Small ribosomal subunit protein eS19 (rps19), found in Gillichthys mirabilis (Long-jawed mudsucker).